Reading from the N-terminus, the 133-residue chain is Small ribosomal subunit protein uS8 (133 aa).

The protein belongs to the universal ribosomal protein uS8 family. As to quaternary structure, part of the 30S ribosomal subunit.

One of the primary rRNA binding proteins, it binds directly to 16S rRNA central domain where it helps coordinate assembly of the platform of the 30S subunit. This Aeropyrum pernix (strain ATCC 700893 / DSM 11879 / JCM 9820 / NBRC 100138 / K1) protein is Small ribosomal subunit protein uS8.